The primary structure comprises 498 residues: MLSNLLILPMLLPFLCALILVFLKNNDRISKYLYLGTMTITTIISLMLLIYVQRHRPITLDFGGWTAPFGIQFLGDSLSLIMVTTASFVITLIMAYGFGRGEHKANRYHLPSFILFLSVGVIGSFLTSDLFNLYVMFEIMLLASFVLITLGQSVEQLRAAIIYVVLNIIGSWLFLLGIGLLYKTVGTLNFSHIAMRLNDMGDNRTVTMISLIFLVAFSAKAALVLFMWLPKAYAVLNTELAALFAALMTKVGAYALIRFFTLLFDQHNGLIHPLLVTMAAITMVIGAIGVIAYKDIKKIAAYQVIISIGFIILGLGTNTFAGINGAIFYLVNDIVVKTLLFFIIGSLVYITGYRQYQYLNGLAKKEPFFGVAFIIMIFAIGGVPPFSGFPGKVLIFQGALQNGNYIGLALMIITSLIAMYSLFRILFYMYFGDKDGEEVHFKKIPQYRKGILSILVVVVIAIGIAAPVLLKITNDATELNTNDQLYQKLVNSHLKGEE.

Transmembrane regions (helical) follow at residues Leu2–Phe22, Tyr32–Val52, Leu78–Phe98, Tyr108–Ser128, Leu130–Leu150, Ile161–Leu181, Ile209–Leu229, Leu240–Phe260, Ile271–Ile291, Ile308–Phe328, Leu330–Ile350, Phe368–Gly388, Gly403–Phe423, and Gly450–Leu470.

The protein belongs to the CPA3 antiporters (TC 2.A.63) subunit D family. In terms of assembly, may form a heterooligomeric complex that consists of seven subunits: mnhA2, mnhB2, mnhC2, mnhD2, mnhE2, mnhF2 and mnhG2.

The protein resides in the cell membrane. The protein is Putative antiporter subunit mnhD2 (mnhD2) of Staphylococcus aureus (strain MRSA252).